The following is an 829-amino-acid chain: DNA ligase (829 aa).

NAD(+) is bound by residues 38-42 (DAEYD), 87-88 (SL), and glutamate 127. Lysine 129 (N6-AMP-lysine intermediate) is an active-site residue. Residues arginine 150, glutamate 187, lysine 305, and lysine 329 each contribute to the NAD(+) site. 4 residues coordinate Zn(2+): cysteine 455, cysteine 458, cysteine 473, and cysteine 479. Residues 534-564 (ETADKGSSENENGDAETVSGDLSKYNTQNGK) form a disordered region. The BRCT domain occupies 752–829 (GINKAVAGKT…SEAELLTLLC (78 aa)).

It belongs to the NAD-dependent DNA ligase family. LigA subfamily. Mg(2+) serves as cofactor. Mn(2+) is required as a cofactor.

The catalysed reaction is NAD(+) + (deoxyribonucleotide)n-3'-hydroxyl + 5'-phospho-(deoxyribonucleotide)m = (deoxyribonucleotide)n+m + AMP + beta-nicotinamide D-nucleotide.. Functionally, DNA ligase that catalyzes the formation of phosphodiester linkages between 5'-phosphoryl and 3'-hydroxyl groups in double-stranded DNA using NAD as a coenzyme and as the energy source for the reaction. It is essential for DNA replication and repair of damaged DNA. This is DNA ligase from Neisseria gonorrhoeae (strain ATCC 700825 / FA 1090).